The sequence spans 519 residues: MTAESGDQIPTVHVATSLPKRGVSSSVLIVPVVSTGDDEQSGERPGAVVASAEPFLSADAIAEIEAGLRALDATGASDQVHRLVVSSLPVSSVLTVGLGKPRYEWTPDAVRRAAGAAARALGTAKTVVTTLADLPGDGVCAAAIEGLILGSYRFSAFRSAKTAPKDAGLHKVTVLTTAKDARKHCAHGAAVATAVATARDLVNTPPSHLYPAELARRAKVLGESVGLEVQVLDEKALQKAGYGGLVGVGQGSSRPPRLVRLTHRGSRLAKNPRRAKKVALVGKGVTFDTGGISIKPAASMHYMTSDMGGAAAVIATVALAAQLELPIDVIATVPIAENMPSATAQRPGDVLTQYGGTTVEVLNTDAEGRLILADAIVRACEDNPDYLIETSTLTGAQTVALGARIPGVMGSDEFRDRVAAISQQVGENGWPMPLPDELKDDLKSTVADLANVSGQRFAGMLVAGVFLREFVADAVDWAHIDVAGPAYNTGSAWGYTPKGATGVPTRTMFAVLEDIAANG.

Mn(2+)-binding residues include K283 and D288. Residue K295 is part of the active site. Mn(2+) is bound by residues D306, D365, and E367. R369 is a catalytic residue.

This sequence belongs to the peptidase M17 family. It depends on Mn(2+) as a cofactor.

It localises to the cytoplasm. It catalyses the reaction Release of an N-terminal amino acid, Xaa-|-Yaa-, in which Xaa is preferably Leu, but may be other amino acids including Pro although not Arg or Lys, and Yaa may be Pro. Amino acid amides and methyl esters are also readily hydrolyzed, but rates on arylamides are exceedingly low.. The enzyme catalyses Release of an N-terminal amino acid, preferentially leucine, but not glutamic or aspartic acids.. Its function is as follows. Presumably involved in the processing and regular turnover of intracellular proteins. Catalyzes the removal of unsubstituted N-terminal amino acids from various peptides. The polypeptide is Probable cytosol aminopeptidase (Mycobacterium marinum (strain ATCC BAA-535 / M)).